Consider the following 141-residue polypeptide: MLSPRRTKFRKQQRGRMEGLATRGSTLNFGDFALQAQEPAWITSRQIEASRRAMTRYIRRGGQIWIRIFPDKPVTMRPAETRMGSGKGNPEFWVAVVKPGRILFEIGGVSEEIAREAMRLASFKLPIKTKFIVRSQPQEQE.

Belongs to the universal ribosomal protein uL16 family. As to quaternary structure, part of the 50S ribosomal subunit.

In terms of biological role, binds 23S rRNA and is also seen to make contacts with the A and possibly P site tRNAs. The polypeptide is Large ribosomal subunit protein uL16 (Nostoc punctiforme (strain ATCC 29133 / PCC 73102)).